The primary structure comprises 547 residues: Inositol 1,4,5-trisphosphate receptor-interacting protein-like 1 (547 aa).

Positions 1–16 (MAVISLLFLAVMYVVH) are cleaved as a signal peptide. Residues 17–96 (HPLMVSDRMD…PFQASGQDGG (80 aa)) lie on the Extracellular side of the membrane. A coiled-coil region spans residues 28–66 (DTLARSRQLEKRMSEEMRQLEIEFEERSRAAEEKQKAEN). The chain crosses the membrane as a helical span at residues 97–117 (PLGWMLGNLWNAGLFCLFLIF). Residues 118 to 547 (ELLRQNMQHE…LPCSPLAGGL (430 aa)) are Cytoplasmic-facing.

This sequence belongs to the ITPRIP family.

Its subcellular location is the cell membrane. Functionally, functions as a ligand of CD3E, inhibiting TCR-CD3 complex signaling to regulate T cell activation. Induces stable CD3E-NCK1 binding, thereby preventing the CD3E-ZAP70 interaction and subsequently inhibiting the activation of the downstream ERK-NFkB signaling cascade and calcium influx. This chain is Inositol 1,4,5-trisphosphate receptor-interacting protein-like 1 (Itpripl1), found in Rattus norvegicus (Rat).